We begin with the raw amino-acid sequence, 103 residues long: Large ribosomal subunit protein bL36m (103 aa).

It belongs to the bacterial ribosomal protein bL36 family. Component of the mitochondrial large ribosomal subunit (mt-LSU). Mature mammalian 55S mitochondrial ribosomes consist of a small (28S) and a large (39S) subunit. The 28S small subunit contains a 12S ribosomal RNA (12S mt-rRNA) and 30 different proteins. The 39S large subunit contains a 16S rRNA (16S mt-rRNA), a copy of mitochondrial valine transfer RNA (mt-tRNA(Val)), which plays an integral structural role, and 52 different proteins. bL36m has a zinc binding site.

It is found in the mitochondrion. The sequence is that of Large ribosomal subunit protein bL36m (MRPL36) from Homo sapiens (Human).